A 243-amino-acid chain; its full sequence is uncharacterized protein (243 aa).

A GP-PDE domain is found at 2 to 240 (TKIFAHRGAS…DFPEKASALL (239 aa)).

This is an uncharacterized protein from Bacillus subtilis (strain 168).